Here is a 614-residue protein sequence, read N- to C-terminus: Probable LRR receptor-like serine/threonine-protein kinase At5g63710 (614 aa).

Residues 1 to 50 (MAHSGNGESFHDPLRGFIQRNCFRWNNQKLILQCFMALAFVGITSSTTQP) form the signal peptide. Topologically, residues 51 to 224 (DIEGGALLQL…VTSSKKKLRD (174 aa)) are extracellular. N-linked (GlcNAc...) asparagine glycosylation is found at Asn-65, Asn-125, Asn-146, and Asn-175. LRR repeat units follow at residues 115-139 (LKFL…LGNM), 141-163 (NLQT…WSQL), and 164-187 (SNLK…FFSI). A helical membrane pass occupies residues 225 to 245 (ITLTASCVASIILFLGAMVMY). Topologically, residues 246-613 (HHHRVRRTKY…DQESIRLSTA (368 aa)) are cytoplasmic. Thr-286 bears the Phosphothreonine mark. The Protein kinase domain maps to 289-573 (FNESNLIGQG…GTGGLAEKWT (285 aa)). 295-303 (IGQGGFGKV) provides a ligand contact to ATP. Position 312 is a phosphothreonine (Thr-312). Position 317 (Lys-317) interacts with ATP. The residue at position 370 (Ser-370) is a Phosphoserine. Residue Thr-389 is modified to Phosphothreonine. Asp-416 acts as the Proton acceptor in catalysis. Phosphothreonine is present on residues Thr-449, Thr-450, and Thr-455. Tyr-463 carries the phosphotyrosine modification. At Thr-466 the chain carries Phosphothreonine. Ser-470 is subject to Phosphoserine. Thr-545 bears the Phosphothreonine mark.

The protein belongs to the protein kinase superfamily. Ser/Thr protein kinase family.

The protein localises to the cell membrane. The catalysed reaction is L-seryl-[protein] + ATP = O-phospho-L-seryl-[protein] + ADP + H(+). It carries out the reaction L-threonyl-[protein] + ATP = O-phospho-L-threonyl-[protein] + ADP + H(+). In Arabidopsis thaliana (Mouse-ear cress), this protein is Probable LRR receptor-like serine/threonine-protein kinase At5g63710.